The primary structure comprises 581 residues: Protein alan shepard (581 aa).

The segment covering 1–10 (MHPRYSPAPP) has biased composition (pro residues). The tract at residues 1–73 (MHPRYSPAPP…AVTAAPPTPR (73 aa)) is disordered. Tyr5 is modified (phosphotyrosine). Residues 35–54 (ANNSQQLPPQMPRSQNYANG) show a composition bias toward polar residues. The span at 55-68 (SSSSAAAASAVTAA) shows a compositional bias: low complexity. Phosphotyrosine is present on residues Tyr128 and Tyr146. The segment covering 168-226 (PATTTYGQRVPTAASPSNTNSSSSSNTGSQSGTLSTSLSHTTNTNTNMGPNGTAQNQNQ) has biased composition (low complexity). The segment at 168–234 (PATTTYGQRV…NQQGGGGEQL (67 aa)) is disordered. RRM domains follow at residues 237–310 (TNLY…MAKQ) and 316–395 (TNLY…FADG). The interval 555–581 (MTDSEQASTAASPDEAYTQYPHQAAPK) is disordered.

Has a role in the perception of gravity. The chain is Protein alan shepard from Drosophila willistoni (Fruit fly).